Reading from the N-terminus, the 499-residue chain is Pyruvate kinase (499 aa).

R50 provides a ligand contact to substrate. N52, S54, D84, and T85 together coordinate K(+). Residue 52-55 coordinates ATP; it reads NFSH. R91 contacts ATP. E241 contacts Mg(2+). G264, D265, and T297 together coordinate substrate. D265 provides a ligand contact to Mg(2+).

Belongs to the pyruvate kinase family. In terms of assembly, homotetramer. It depends on Mg(2+) as a cofactor. K(+) is required as a cofactor.

The catalysed reaction is pyruvate + ATP = phosphoenolpyruvate + ADP + H(+). The protein operates within carbohydrate degradation; glycolysis; pyruvate from D-glyceraldehyde 3-phosphate: step 5/5. Activated by fructose 2,6-bisphosphate, activated by the effector in a non cooperative manner. This chain is Pyruvate kinase (PYK), found in Leishmania mexicana.